Reading from the N-terminus, the 383-residue chain is Putative type I specificity subunit S.MgeORF438P (383 aa).

A TRD1 region spans residues 1–142 (MTPKLKLNNN…KELEIPFTSN (142 aa)). The interval 143–182 (KNEQHAIANTLSVFDERLENLASLIEINRKLRDEYAHKLF) is conserved region 1. A coiled-coil region spans residues 143–182 (KNEQHAIANTLSVFDERLENLASLIEINRKLRDEYAHKLF). Positions 183 to 330 (SLDEAFLSHW…GEIKVPYVKS (148 aa)) are TRD2. The conserved region 2 stretch occupies residues 331–370 (FQLQRKAGKIVFLLDQKLDQYKKELSSLTVIRDTLLKKLF). Residues 331 to 370 (FQLQRKAGKIVFLLDQKLDQYKKELSSLTVIRDTLLKKLF) adopt a coiled-coil conformation.

It belongs to the type-I restriction system S methylase family.

Functionally, the specificity (S) subunit of a type I restriction enzyme; this subunit dictates DNA sequence specificity. This bacterium does not encode the associated endonuclease or methylase subunits. The protein is Putative type I specificity subunit S.MgeORF438P of Mycoplasma genitalium (strain ATCC 33530 / DSM 19775 / NCTC 10195 / G37) (Mycoplasmoides genitalium).